The following is a 382-amino-acid chain: UDP-4-amino-4-deoxy-L-arabinose--oxoglutarate aminotransferase (382 aa).

An N6-(pyridoxal phosphate)lysine modification is found at Lys182.

It belongs to the DegT/DnrJ/EryC1 family. ArnB subfamily. Homodimer. Pyridoxal 5'-phosphate is required as a cofactor.

It catalyses the reaction UDP-4-amino-4-deoxy-beta-L-arabinose + 2-oxoglutarate = UDP-beta-L-threo-pentopyranos-4-ulose + L-glutamate. Its pathway is nucleotide-sugar biosynthesis; UDP-4-deoxy-4-formamido-beta-L-arabinose biosynthesis; UDP-4-deoxy-4-formamido-beta-L-arabinose from UDP-alpha-D-glucuronate: step 2/3. The protein operates within bacterial outer membrane biogenesis; lipopolysaccharide biosynthesis. In terms of biological role, catalyzes the conversion of UDP-4-keto-arabinose (UDP-Ara4O) to UDP-4-amino-4-deoxy-L-arabinose (UDP-L-Ara4N). The modified arabinose is attached to lipid A and is required for resistance to polymyxin and cationic antimicrobial peptides. This is UDP-4-amino-4-deoxy-L-arabinose--oxoglutarate aminotransferase from Pectobacterium carotovorum subsp. carotovorum (strain PC1).